Consider the following 322-residue polypeptide: Lipoyl synthase (322 aa).

Residues cysteine 66, cysteine 71, cysteine 77, cysteine 92, cysteine 96, cysteine 99, and serine 306 each contribute to the [4Fe-4S] cluster site. The Radical SAM core domain occupies 78-295 (FSKGTATFMI…EKEAYELGFS (218 aa)).

The protein belongs to the radical SAM superfamily. Lipoyl synthase family. [4Fe-4S] cluster serves as cofactor.

The protein localises to the cytoplasm. The enzyme catalyses [[Fe-S] cluster scaffold protein carrying a second [4Fe-4S](2+) cluster] + N(6)-octanoyl-L-lysyl-[protein] + 2 oxidized [2Fe-2S]-[ferredoxin] + 2 S-adenosyl-L-methionine + 4 H(+) = [[Fe-S] cluster scaffold protein] + N(6)-[(R)-dihydrolipoyl]-L-lysyl-[protein] + 4 Fe(3+) + 2 hydrogen sulfide + 2 5'-deoxyadenosine + 2 L-methionine + 2 reduced [2Fe-2S]-[ferredoxin]. Its pathway is protein modification; protein lipoylation via endogenous pathway; protein N(6)-(lipoyl)lysine from octanoyl-[acyl-carrier-protein]: step 2/2. Catalyzes the radical-mediated insertion of two sulfur atoms into the C-6 and C-8 positions of the octanoyl moiety bound to the lipoyl domains of lipoate-dependent enzymes, thereby converting the octanoylated domains into lipoylated derivatives. The chain is Lipoyl synthase from Neisseria meningitidis serogroup C (strain 053442).